A 453-amino-acid chain; its full sequence is Probable acetylornithine aminotransferase, mitochondrial (453 aa).

Position 302 is an N6-(pyridoxal phosphate)lysine (lysine 302).

It belongs to the class-III pyridoxal-phosphate-dependent aminotransferase family. Requires pyridoxal 5'-phosphate as cofactor.

Its subcellular location is the mitochondrion matrix. The enzyme catalyses N(2)-acetyl-L-ornithine + 2-oxoglutarate = N-acetyl-L-glutamate 5-semialdehyde + L-glutamate. Its pathway is amino-acid biosynthesis; L-arginine biosynthesis; N(2)-acetyl-L-ornithine from L-glutamate: step 4/4. The protein is Probable acetylornithine aminotransferase, mitochondrial (argD) of Dictyostelium discoideum (Social amoeba).